A 237-amino-acid polypeptide reads, in one-letter code: Phosphatidylserine decarboxylase proenzyme (237 aa).

Catalysis depends on Ser206, which acts as the Schiff-base intermediate with substrate; via pyruvic acid. A Pyruvic acid (Ser); by autocatalysis modification is found at Ser206.

Belongs to the phosphatidylserine decarboxylase family. PSD-A subfamily. In terms of assembly, heterodimer of a large membrane-associated beta subunit and a small pyruvoyl-containing alpha subunit. It depends on pyruvate as a cofactor. Post-translationally, is synthesized initially as an inactive proenzyme. Formation of the active enzyme involves a self-maturation process in which the active site pyruvoyl group is generated from an internal serine residue via an autocatalytic post-translational modification. Two non-identical subunits are generated from the proenzyme in this reaction, and the pyruvate is formed at the N-terminus of the alpha chain, which is derived from the carboxyl end of the proenzyme. The post-translation cleavage follows an unusual pathway, termed non-hydrolytic serinolysis, in which the side chain hydroxyl group of the serine supplies its oxygen atom to form the C-terminus of the beta chain, while the remainder of the serine residue undergoes an oxidative deamination to produce ammonia and the pyruvoyl prosthetic group on the alpha chain.

Its subcellular location is the cell membrane. The enzyme catalyses a 1,2-diacyl-sn-glycero-3-phospho-L-serine + H(+) = a 1,2-diacyl-sn-glycero-3-phosphoethanolamine + CO2. It functions in the pathway phospholipid metabolism; phosphatidylethanolamine biosynthesis; phosphatidylethanolamine from CDP-diacylglycerol: step 2/2. Its function is as follows. Catalyzes the formation of phosphatidylethanolamine (PtdEtn) from phosphatidylserine (PtdSer). The polypeptide is Phosphatidylserine decarboxylase proenzyme (Rhodococcus jostii (strain RHA1)).